We begin with the raw amino-acid sequence, 284 residues long: Diaminopimelate epimerase (284 aa).

Substrate is bound by residues Asn-20, Gln-53, and Asn-73. Residue Cys-82 is the Proton donor of the active site. Residues 83 to 84 (GN), Asn-167, Asn-200, and 218 to 219 (ER) each bind substrate. Cys-227 acts as the Proton acceptor in catalysis. 228–229 (GS) is a binding site for substrate.

The protein belongs to the diaminopimelate epimerase family. In terms of assembly, homodimer.

The protein resides in the cytoplasm. The enzyme catalyses (2S,6S)-2,6-diaminopimelate = meso-2,6-diaminopimelate. Its pathway is amino-acid biosynthesis; L-lysine biosynthesis via DAP pathway; DL-2,6-diaminopimelate from LL-2,6-diaminopimelate: step 1/1. Functionally, catalyzes the stereoinversion of LL-2,6-diaminopimelate (L,L-DAP) to meso-diaminopimelate (meso-DAP), a precursor of L-lysine and an essential component of the bacterial peptidoglycan. This Xanthomonas euvesicatoria pv. vesicatoria (strain 85-10) (Xanthomonas campestris pv. vesicatoria) protein is Diaminopimelate epimerase.